The sequence spans 321 residues: MASSQGKNELKLADWMATLPESMHSIPLTNLAIPGSHDSFSFYIDEASPVGPEQPETVQNFVSVFGTVAKKLMRKWLATQTMNFTGQLGAGIRYFDLRISTKPRDPDNELYFAHGLFSAKVNEGLEEINAFLTDHHKEVVFLDFNHFYGMQKYHHEKLVQMLKDIYGNKMCPAIFAQEVSLKYLWEKDYQVLVFYHSPVALEVPFLWPGQMMPAPWANTTDPEKLIQFLQASITERRKKGSFFISQVVLTPKASTVVKGVASGLRETITERALPAMMQWVRTQKPGESGINIVTADFVELGDFISTVIKLNYVFDEGEANT.

The region spanning 22 to 197 (SMHSIPLTNL…DYQVLVFYHS (176 aa)) is the PI-PLC X-box domain. Residues His-37 and His-114 contribute to the active site.

As to expression, expressed at highest levels in heart. Also detected in kidney, lung, small intestine and colon. Expressed at very low levels, if any, in leukocytes, thymus and skeletal muscle.

The protein localises to the cytoplasm. In Homo sapiens (Human), this protein is PI-PLC X domain-containing protein 3 (PLCXD3).